The following is a 456-amino-acid chain: D-glycerate 3-kinase, chloroplastic (456 aa).

A chloroplast-targeting transit peptide spans 1–63 (MAVAISGSSL…KFNDHVVNPS (63 aa)). Residue 215-222 (APQGCGKT) coordinates ATP.

It belongs to the GLYK kinase family.

The protein resides in the plastid. Its subcellular location is the chloroplast. It is found in the cytoplasm. It carries out the reaction (R)-glycerate + ATP = (2R)-3-phosphoglycerate + ADP + H(+). It participates in photosynthesis; photorespiration; 3-phospho-D-glycerate from glycine: step 4/4. Functionally, catalyzes the concluding reaction of the photorespiratory C2 cycle, an indispensable ancillary metabolic pathway to the photosynthetic C3 cycle that enables land plants to grow in an oxygen-containing atmosphere. Cytoplasmic D-glycerate 3-kinase that constitutes a photorespiratory bypass that alleviates fluctuating light-induced photoinhibition. The protein is D-glycerate 3-kinase, chloroplastic of Arabidopsis thaliana (Mouse-ear cress).